Consider the following 358-residue polypeptide: Alanine racemase (358 aa).

Lys35 acts as the Proton acceptor; specific for D-alanine in catalysis. Position 35 is an N6-(pyridoxal phosphate)lysine (Lys35). Position 130 (Arg130) interacts with substrate. The active-site Proton acceptor; specific for L-alanine is Tyr255. Met303 provides a ligand contact to substrate.

It belongs to the alanine racemase family. Pyridoxal 5'-phosphate serves as cofactor.

It carries out the reaction L-alanine = D-alanine. It functions in the pathway amino-acid biosynthesis; D-alanine biosynthesis; D-alanine from L-alanine: step 1/1. Catalyzes the interconversion of L-alanine and D-alanine. May also act on other amino acids. The sequence is that of Alanine racemase (alr) from Shewanella loihica (strain ATCC BAA-1088 / PV-4).